Consider the following 506-residue polypeptide: Cobyric acid synthase (506 aa).

The GATase cobBQ-type domain occupies 251-448 (DITIAIVQLP…LHGLFDSDAF (198 aa)). Residue Cys-332 is the Nucleophile of the active site. His-440 is a catalytic residue.

This sequence belongs to the CobB/CobQ family. CobQ subfamily.

Its pathway is cofactor biosynthesis; adenosylcobalamin biosynthesis. Catalyzes amidations at positions B, D, E, and G on adenosylcobyrinic A,C-diamide. NH(2) groups are provided by glutamine, and one molecule of ATP is hydrogenolyzed for each amidation. The protein is Cobyric acid synthase of Salmonella heidelberg (strain SL476).